Reading from the N-terminus, the 468-residue chain is 6-phospho-beta-galactosidase (468 aa).

5 residues coordinate D-galactose 6-phosphate: Gln-19, His-116, Asn-159, Glu-160, and Asn-297. Glu-160 serves as the catalytic Proton donor. The Nucleophile role is filled by Glu-375. 4 residues coordinate D-galactose 6-phosphate: Ser-428, Trp-429, Lys-435, and Tyr-437.

The protein belongs to the glycosyl hydrolase 1 family.

It catalyses the reaction a 6-phospho-beta-D-galactoside + H2O = D-galactose 6-phosphate + an alcohol. The protein operates within carbohydrate metabolism; lactose degradation; D-galactose 6-phosphate and beta-D-glucose from lactose 6-phosphate: step 1/1. The chain is 6-phospho-beta-galactosidase from Streptococcus pyogenes serotype M28 (strain MGAS6180).